The chain runs to 597 residues: Pentatricopeptide repeat-containing protein At2g21090 (597 aa).

PPR repeat units lie at residues 45–79, 81–111, 112–142, 143–177, 178–212, 213–243, 244–274, 275–309, 310–344, 345–375, 377–411, 412–447, and 448–478; these read PFDLLASLLQQCGDTKSLKQGKWIHRHLKITGFKR, NTLLSNHLIGMYMKCGKPIDACKVFDQMHLR, NLYSWNNMVSGYVKSGMLVRARVVFDSMPER, DVVSWNTMVIGYAQDGNLHEALWFYKEFRRSGIKF, NEFSFAGLLTACVKSRQLQLNRQAHGQVLVAGFLS, NVVLSCSIIDAYAKCGQMESAKRCFDEMTVK, DIHIWTTLISGYAKLGDMEAAEKLFCEMPEK, NPVSWTALIAGYVRQGSGNRALDLFRKMIALGVKP, EQFTFSSCLCASASIASLRHGKEIHGYMIRTNVRP, NAIVISSLIDMYSKSGSLEASERVFRICDDK, DCVFWNTMISALAQHGLGHKALRMLDDMIKFRVQP, NRTTLVVILNACSHSGLVEEGLRWFESMTVQHGIVP, and DQEHYACLIDLLGRAGCFKELMRKIEEMPFE. Residues 483–558 are type E motif; sequence IWNAILGVCR…EKAVSWIEIE (76 aa). Residues 559–591 form a type E(+) motif region; it reads KKVEAFTVSDGSHAHARKEEIYFILHNLAAVIE.

This sequence belongs to the PPR family. PCMP-E subfamily.

The protein is Pentatricopeptide repeat-containing protein At2g21090 (PCMP-E48) of Arabidopsis thaliana (Mouse-ear cress).